The chain runs to 859 residues: Leucine--tRNA ligase (859 aa).

Positions 42 to 52 (PYPSGRLHMGH) match the 'HIGH' region motif. Positions 618-622 (KMSKS) match the 'KMSKS' region motif. ATP is bound at residue Lys621.

The protein belongs to the class-I aminoacyl-tRNA synthetase family.

The protein localises to the cytoplasm. It catalyses the reaction tRNA(Leu) + L-leucine + ATP = L-leucyl-tRNA(Leu) + AMP + diphosphate. This chain is Leucine--tRNA ligase, found in Shewanella woodyi (strain ATCC 51908 / MS32).